Here is a 1146-residue protein sequence, read N- to C-terminus: Nucleolar protein 6 (1146 aa).

A disordered region spans residues 1–48 (MGPAPAGEQLRGATGEPEVMEPALEGTGKEGKKASSRKRTLAEPPAKG). S56 carries the phosphoserine modification. A coiled-coil region spans residues 83–114 (LLRLQVEELLKEVRLSEKKKDRIDAFLREVNQ). Phosphoserine occurs at positions 283, 289, and 811.

The protein belongs to the NRAP family. As to quaternary structure, part of the small subunit (SSU) processome, composed of more than 70 proteins and the RNA chaperone small nucleolar RNA (snoRNA) U3. Interacts with RRP7A; required for NOL6 localization to nucleolus.

It is found in the nucleus. The protein resides in the nucleolus. The protein localises to the chromosome. Functionally, part of the small subunit (SSU) processome, first precursor of the small eukaryotic ribosomal subunit. During the assembly of the SSU processome in the nucleolus, many ribosome biogenesis factors, an RNA chaperone and ribosomal proteins associate with the nascent pre-rRNA and work in concert to generate RNA folding, modifications, rearrangements and cleavage as well as targeted degradation of pre-ribosomal RNA by the RNA exosome. The sequence is that of Nucleolar protein 6 from Homo sapiens (Human).